The following is a 424-amino-acid chain: STAM-binding protein (424 aa).

The interval 1–127 (MSDHGDVSLP…YTEYNEEKKK (127 aa)) is interaction with CHMP3. 2 positions are modified to phosphoserine: S2 and S48. Residues 227–231 (PAKPP) are interaction with STAM. 3 positions are modified to phosphoserine: S243, S245, and S247. Residues 257 to 388 (VVVPGRLCPQ…LTDHGLEEIS (132 aa)) form the MPN domain. Residues H335, H337, D348, H350, C390, H396, and H398 each coordinate Zn(2+). Residues 335 to 348 (HTHPTQTAFLSSVD) carry the JAMM motif motif.

This sequence belongs to the peptidase M67C family. In terms of assembly, interacts with STAM. Interacts with SMAD6 and SMAD7. Interacts with CHMP3; the interaction appears to relieve the autoinhibition of CHMP3. Interacts with SMURF2 and RNF11; this interaction promotes ubiquitination. Requires Zn(2+) as cofactor. In terms of processing, phosphorylated after BMP type I receptor activation. Post-translationally, ubiquitinated by SMURF2 in the presence of RNF11. In terms of tissue distribution, ubiquitously expressed.

The protein resides in the nucleus. The protein localises to the membrane. It localises to the cytoplasm. Its subcellular location is the early endosome. Its activity is regulated as follows. Inhibited by N-ethylmaleimide. Strongly and specifically inhibited by ubiquitin variants UbV(SP.2) and UbV(SP.3). Also inhibited by UbV(SP.1); an ubiquitin variant that also inhibits STAMBPL1. Zinc metalloprotease that specifically cleaves 'Lys-63'-linked polyubiquitin chains. Does not cleave 'Lys-48'-linked polyubiquitin chains. Plays a role in signal transduction for cell growth and MYC induction mediated by IL-2 and GM-CSF. Potentiates BMP (bone morphogenetic protein) signaling by antagonizing the inhibitory action of SMAD6 and SMAD7. Has a key role in regulation of cell surface receptor-mediated endocytosis and ubiquitin-dependent sorting of receptors to lysosomes. Endosomal localization of STAMBP is required for efficient EGFR degradation but not for its internalization. Involved in the negative regulation of PI3K-AKT-mTOR and RAS-MAP signaling pathways. This chain is STAM-binding protein (STAMBP), found in Homo sapiens (Human).